The primary structure comprises 212 residues: uncharacterized protein (212 aa).

Positions 1–20 (MKNLTIGAIFLIFFAVSAFA) are cleaved as a signal peptide.

Its subcellular location is the virion. This is an uncharacterized protein from Acanthamoeba polyphaga (Amoeba).